A 323-amino-acid chain; its full sequence is Acetyl-coenzyme A carboxylase carboxyl transferase subunit alpha (323 aa).

The CoA carboxyltransferase C-terminal domain occupies 40-293 (LAEKSLQLTK…RKALAESLKT (254 aa)).

Belongs to the AccA family. As to quaternary structure, acetyl-CoA carboxylase is a heterohexamer composed of biotin carboxyl carrier protein (AccB), biotin carboxylase (AccC) and two subunits each of ACCase subunit alpha (AccA) and ACCase subunit beta (AccD).

Its subcellular location is the cytoplasm. It carries out the reaction N(6)-carboxybiotinyl-L-lysyl-[protein] + acetyl-CoA = N(6)-biotinyl-L-lysyl-[protein] + malonyl-CoA. It participates in lipid metabolism; malonyl-CoA biosynthesis; malonyl-CoA from acetyl-CoA: step 1/1. Component of the acetyl coenzyme A carboxylase (ACC) complex. First, biotin carboxylase catalyzes the carboxylation of biotin on its carrier protein (BCCP) and then the CO(2) group is transferred by the carboxyltransferase to acetyl-CoA to form malonyl-CoA. The polypeptide is Acetyl-coenzyme A carboxylase carboxyl transferase subunit alpha (Polynucleobacter necessarius subsp. necessarius (strain STIR1)).